We begin with the raw amino-acid sequence, 583 residues long: Isocitrate dehydrogenase kinase/phosphatase (583 aa).

ATP contacts are provided by residues 315–321 and Lys-336; that span reads APGIRGM. Asp-371 is a catalytic residue.

Belongs to the AceK family.

The protein localises to the cytoplasm. The catalysed reaction is L-seryl-[isocitrate dehydrogenase] + ATP = O-phospho-L-seryl-[isocitrate dehydrogenase] + ADP + H(+). Its function is as follows. Bifunctional enzyme which can phosphorylate or dephosphorylate isocitrate dehydrogenase (IDH) on a specific serine residue. This is a regulatory mechanism which enables bacteria to bypass the Krebs cycle via the glyoxylate shunt in response to the source of carbon. When bacteria are grown on glucose, IDH is fully active and unphosphorylated, but when grown on acetate or ethanol, the activity of IDH declines drastically concomitant with its phosphorylation. The polypeptide is Isocitrate dehydrogenase kinase/phosphatase (Salmonella dublin (strain CT_02021853)).